The sequence spans 670 residues: Extracellular matrix protein 2 (670 aa).

An N-terminal signal peptide occupies residues 1–19 (MKLAVLFCFILLIVLQTDC). Positions 96–153 (GYCFVKGMIMYNKAVWSPEPCTTCLCSNGRVLCDETECHPKACPYTIKPEGECCPICS) constitute a VWFC domain. The interval 185 to 270 (SEEDEEIAEG…EEDAIRGDVF (86 aa)) is disordered. Basic and acidic residues predominate over residues 192–227 (AEGHKEHKKETSVPTKIHGDGERTERKLRPEKEGRS). The segment covering 241-263 (ESKEETEREGEEEEEEEEEEEED) has biased composition (acidic residues). The Cell attachment site signature appears at 266–268 (RGD). The LRRNT domain maps to 278-315 (PGTPRGRPRLPRSCSLSYRTISCVHADFTEIPPITAPE). LRR repeat units lie at residues 339–359 (NLER…GPKA), 365–386 (KLMR…LPST), 387–407 (LEEL…SLSD), 410–430 (QLVT…DPLA), 436–456 (SLSY…GLPA), 457–478 (STEE…CFNH), 481–501 (KITM…APLA), 507–528 (NLES…LPKS), 529–549 (LLHL…VFGH), 553–573 (GLEY…DLVS), 580–601 (SLRE…IQDM), 603–624 (ALHF…QICN), and 632–655 (ALEH…AFSC). The N-linked (GlcNAc...) asparagine glycan is linked to N349. N420 carries N-linked (GlcNAc...) asparagine glycosylation. N477 is a glycosylation site (N-linked (GlcNAc...) asparagine).

This sequence belongs to the small leucine-rich proteoglycan (SLRP) family. SLRP class I subfamily. In terms of assembly, interacts with numerous extracellular matrix proteins. Interacts with isoform 1 of MSL1. Interacts with isoform 3 of RASSF1.

The protein localises to the secreted. It is found in the extracellular space. The protein resides in the extracellular matrix. Promotes matrix assembly and cell adhesiveness. This Mus musculus (Mouse) protein is Extracellular matrix protein 2 (Ecm2).